Here is a 524-residue protein sequence, read N- to C-terminus: Indoleacetamide hydrolase (524 aa).

Basic residues-rich tracts occupy residues 1–26 and 34–54; these read MAKK…KATA and AAKK…RRPK. The segment at 1-56 is disordered; sequence MAKKTASKKKSVSRKVTKTSSKKATARKGAVAKAAKKSVKKAAPRKSATARRPKGP. Catalysis depends on charge relay system residues lysine 133 and serine 208. The Acyl-ester intermediate role is filled by serine 232.

It belongs to the amidase family.

The protein operates within plant hormone metabolism; auxin biosynthesis. Hydrolyzes indole-3-acetamide (IAM) into indole-3-acetic acid (IAA). The chain is Indoleacetamide hydrolase (bam) from Bradyrhizobium diazoefficiens (strain JCM 10833 / BCRC 13528 / IAM 13628 / NBRC 14792 / USDA 110).